A 110-amino-acid polypeptide reads, in one-letter code: Class I hydrophobin 2 (110 aa).

A signal peptide spans 1–19; that stretch reads MFARAASVFVLSLPILATA. Cystine bridges form between Cys29–Cys89, Cys36–Cys83, Cys37–Cys70, and Cys90–Cys103.

This sequence belongs to the fungal hydrophobin family. As to quaternary structure, self-assembles to form functional amyloid fibrils called rodlets. Self-assembly into fibrillar rodlets occurs spontaneously at hydrophobic:hydrophilic interfaces and the rodlets further associate laterally to form amphipathic monolayers.

It is found in the secreted. The protein resides in the cell wall. Functionally, aerial growth, conidiation, and dispersal of filamentous fungi in the environment rely upon a capability of their secreting small amphipathic proteins called hydrophobins (HPBs) with low sequence identity. Class I can self-assemble into an outermost layer of rodlet bundles on aerial cell surfaces, conferring cellular hydrophobicity that supports fungal growth, development and dispersal; whereas Class II form highly ordered films at water-air interfaces through intermolecular interactions but contribute nothing to the rodlet structure. Pnh2 is a class I hydrophobin that might be involved in the attachment of the hydrophilic wall of hyphae to the hydrophobic surface of wood under inorganic phosphate (Pi)-deficient conditions and enable the mycelium to degrade efficiently the components of wood and to acquire nutrients containing Pi. This Pholiota nameko protein is Class I hydrophobin 2.